A 785-amino-acid polypeptide reads, in one-letter code: Tripartite terminase subunit 1 (785 aa).

The segment at 201–229 adopts a C3H1-type zinc-finger fold; sequence CAVCFEELCVTANQGATIARRLADRICNH. The tract at residues 439-487 is disordered; sequence GGATGGAEEEEPRAAAEEGGRRRGAGTPASEDGERGPEPGAQGPESWGD. Over residues 450–459 the composition is skewed to basic and acidic residues; sequence PRAAAEEGGR. 696 to 703 provides a ligand contact to ATP; that stretch reads FASVYRCG.

Belongs to the herpesviridae TRM1 protein family. In terms of assembly, associates with TRM2 and TRM3 to form the tripartite terminase complex. Interacts with portal protein.

It is found in the host nucleus. Functionally, component of the molecular motor that translocates viral genomic DNA in empty capsid during DNA packaging. Forms a tripartite terminase complex together with TRM2 and TRM3 in the host cytoplasm. Once the complex reaches the host nucleus, it interacts with the capsid portal vertex. This portal forms a ring in which genomic DNA is translocated into the capsid. TRM1 carries an endonuclease activity that plays an important role for the cleavage of concatemeric viral DNA into unit length genomes. The polypeptide is Tripartite terminase subunit 1 (Human herpesvirus 2 (strain HG52) (HHV-2)).